The chain runs to 623 residues: DEAD-box ATP-dependent RNA helicase 52C (623 aa).

Positions 1-120 are disordered; that stretch reads MATPSRTSWA…DGDAAAGAGD (120 aa). The span at 10 to 29 shows a compositional bias: low complexity; that stretch reads ADVADADPAPAPAPAANGPA. The span at 54–69 shows a compositional bias: pro residues; sequence APPPSSSSSSAPPPRA. Residues 70–83 are compositionally biased toward low complexity; sequence APGLLAPRPAAAGM. Residues 84–97 are compositionally biased toward gly residues; it reads GRMGGGGGGGGFGG. A Q motif motif is present at residues 155-183; the sequence is GTFAEIDLGQALNDNIRRCKYVRPTPVQR. The Helicase ATP-binding domain maps to 186–372; it reads IPISLAGRDL…SDFLENYIFL (187 aa). An ATP-binding site is contributed by 199 to 206; the sequence is AQTGSGKT. The short motif at 316–319 is the DEAD box element; sequence DEAD. The 152-residue stretch at 399-550 folds into the Helicase C-terminal domain; it reads HLMDLLHAQR…EVPAWLSRYA (152 aa). A disordered region spans residues 553–595; sequence PSYGGGGGRNRRSGGGSRFGGRDFRRDSSSGRGGGDYYGGGSS. Positions 555 to 571 are enriched in gly residues; the sequence is YGGGGGRNRRSGGGSRF. A compositionally biased stretch (basic and acidic residues) spans 572–581; the sequence is GGRDFRRDSS. Residues 583 to 595 are compositionally biased toward gly residues; the sequence is GRGGGDYYGGGSS.

Belongs to the DEAD box helicase family. DDX3/DED1 subfamily.

The catalysed reaction is ATP + H2O = ADP + phosphate + H(+). This chain is DEAD-box ATP-dependent RNA helicase 52C, found in Oryza sativa subsp. japonica (Rice).